Consider the following 51-residue polypeptide: Large ribosomal subunit protein eL39 (51 aa).

This sequence belongs to the eukaryotic ribosomal protein eL39 family.

This is Large ribosomal subunit protein eL39 from Thermococcus onnurineus (strain NA1).